Consider the following 67-residue polypeptide: Probable archaeal histone 3 (67 aa).

Interaction with DNA regions lie at residues 20-22 and 54-57; these read RVS and KTVK.

The protein belongs to the archaeal histone HMF family. As to quaternary structure, homodimer or heterodimer with another histone. Dimers then assemble into higher oligomers, with the DNA wrapped around the protein core.

The protein resides in the cytoplasm. It localises to the chromosome. Its function is as follows. Binds and compact DNA (95 to 150 base pairs) to form nucleosome-like structures that contain positive DNA supercoils. Increases the resistance of DNA to thermal denaturation (in vitro). This is Probable archaeal histone 3 from Methanocaldococcus jannaschii (strain ATCC 43067 / DSM 2661 / JAL-1 / JCM 10045 / NBRC 100440) (Methanococcus jannaschii).